We begin with the raw amino-acid sequence, 914 residues long: MEAAVKEEISLEDEAVDKNIFRDCNKIAFYRRQKQWLSKKSTYQALLDSVTTDEDSTRFQIINEASKVPLLAEIYGIEGNIFRLKINEETPLKPRFEVPDVLTSKPSTVRLISCSGDTGSLILADGKGDLKCHITANPFKVDLVSEEEVVISINSLGQLYFEHLQILHKQRAAKENEEETSVDTSQENQEDLGLWEEKFGKFVDIKANGPSSIGLDFSLHGFEHLYGIPQHAESHQLKNTGDGDAYRLYNLDVYGYQIYDKMGIYGSVPYLLAHKLGRTIGIFWLNASETLVEINTEPAVEYTLTQMGPVAAKQKVRSRTHVHWMSESGIIDVFLLTGPTPSDVFKQYSHLTGTQAMPPLFSLGYHQCRWNYEDEQDVKAVDAGFDEHDIPYDAMWLDIEHTEGKRYFTWDKNRFPNPKRMQELLRSKKRKLVVISDPHIKIDPDYSVYVKAKDQGFFVKNQEGEDFEGVCWPGLSSYLDFTNPKVREWYSSLFAFPVYQGSTDILFLWNDMNEPSVFRGPEQTMQKNAIHHGNWEHRELHNIYGFYHQMATAEGLIKRSKGKERPFVLTRSFFAGSQKYGAVWTGDNTAEWSNLKISIPMLLTLSITGISFCGADIGGFIGNPETELLVRWYQAGAYQPFFRGHATMNTKRREPWLFGEEHTRLIREAIRERYGLLPYWYSLFYHAHVASQPVMRPLWVEFPDELKTFDMEDEYMLGSALLVHPVTEPKATTVDVFLPGSNEVWYDYKTFAHWEGGCTVKIPVALDTIPVFQRGGSVIPIKTTVGKSTGWMTESSYGLRVALSTKGSSVGELYLDDGHSFQYLHQKQFLHRKFSFCSSVLINSFADQRGHYPSKCVVEKILVLGFRKEPSSVTTHSSDGKDQPVAFTYCAKTSILSLEKLSLNIATDWEVRII.

Asp511 functions as the Nucleophile in the catalytic mechanism. Residue Glu514 is part of the active site. The active-site Proton donor is the Asp587.

Belongs to the glycosyl hydrolase 31 family.

It catalyses the reaction Hydrolysis of terminal, non-reducing (1-&gt;4)-linked alpha-D-glucose residues with release of alpha-D-glucose.. Has alpha-glucosidase activity. The sequence is that of Neutral alpha-glucosidase C (GANC) from Homo sapiens (Human).